The primary structure comprises 182 residues: Plasmolipin (182 aa).

Residues 1 to 20 (MAEFPSKVSTRTSSPAQGVG) are disordered. Residues 1-35 (MAEFPSKVSTRTSSPAQGVGASVSAMRPDLGFVRS) lie on the Cytoplasmic side of the membrane. A compositionally biased stretch (polar residues) spans 7-16 (KVSTRTSSPA). Ser9 carries the phosphoserine modification. An MARVEL domain is found at 32 to 166 (FVRSALGVLA…SAFFSFQAWR (135 aa)). Residues 36-56 (ALGVLALLQLVLGLLVWALIA) form a helical membrane-spanning segment. Over 57–68 (DTPYHLYPAYGW) the chain is Extracellular. The helical transmembrane segment at 69–89 (VMFVAVFLWLVTIVFFIIYLF) threads the bilayer. Over 90–99 (QLHMKLYMVP) the chain is Cytoplasmic. The chain crosses the membrane as a helical span at residues 100 to 120 (WPLVLLVFFVAATVLYITAFV). Residues 121–141 (ACAAAVDLTSLRGSRPYNQRS) are Extracellular-facing. The chain crosses the membrane as a helical span at residues 142 to 162 (AASFFACLVMIAYGLSAFFSF). At 163-182 (QAWRGVGSNAATSQMAGGYS) the chain is on the cytoplasmic side.

Belongs to the MAL family. In terms of assembly, forms oligomers. Post-translationally, phosphorylated. In terms of tissue distribution, detected to the sciatic nerve, brain and kidney. In the sciatic nerve, found in Schwann cells; in the brain, in developing oligodendrocytes, especially of the corpus callosum, of cortical white matter, in the optic nerve and in the stratum radiatum and stratum oriens of the hippocampus. In kidney, segregated to the apical surface of renal tubular epithelia.

Its subcellular location is the cell membrane. It is found in the myelin membrane. The protein localises to the apical cell membrane. In terms of biological role, main component of the myelin sheath that plays an important role in myelin membrane biogenesis and myelination. Plays an essential function in apical endocytosis. Regulates epithelial development through the regulation of apical endocytosis. Part of the intracellular machinery that mediates basolateral-to-apical transport of ICAM-1, an essential adhesion receptor in epithelial cells, from the subapical compartment in hepatic epithelial cells. This is Plasmolipin (Pllp) from Rattus norvegicus (Rat).